Consider the following 317-residue polypeptide: Melanocyte-stimulating hormone receptor (317 aa).

At 1-37 (MPVQGSQRRLLGSLNSTPTATPKLGLAANQTGAWCLE) the chain is on the extracellular side. N29 carries an N-linked (GlcNAc...) asparagine glycan. A helical transmembrane segment spans residues 38-63 (VSIPDGLFLSLGLVSLVENVLVVAAI). Residues 64–72 (AKNRNLHSP) lie on the Cytoplasmic side of the membrane. Residues 73–93 (MYCFICCLALSDLLVSGSNML) traverse the membrane as a helical segment. The Extracellular segment spans residues 94–118 (ETAVILLLEAGALAARAAVVQQLDN). A helical transmembrane segment spans residues 119 to 140 (VIDVITCSSMLSSLCFLGAIAV). The Cytoplasmic portion of the chain corresponds to 141–163 (DRYISIFYALRYHSIVTLPRAQR). A helical membrane pass occupies residues 164–183 (VVAAIWVASVLFSTLFIAYY). Residues 184-191 (DHAAVLLC) are Extracellular-facing. A helical transmembrane segment spans residues 192–211 (LVVFFLAMLVLMAVLYVHML). Residues 212 to 240 (ARACQHAQGIAQLHKRQRPAHQGFGLKGA) are Cytoplasmic-facing. The helical transmembrane segment at 241-266 (ATLTILLGIFFLCWGPFFLHLTLIVL) threads the bilayer. The Extracellular segment spans residues 267–279 (CPQHPTCSCIFKN). Residues 280–300 (FNLFLALIICNAIIDPLIYAF) form a helical membrane-spanning segment. Over 301–317 (RSQELRRTLKEVLLCSW) the chain is Cytoplasmic. C315 is lipidated: S-palmitoyl cysteine.

Belongs to the G-protein coupled receptor 1 family. Interacts with MGRN1, but does not undergo MGRN1-mediated ubiquitination; this interaction competes with GNAS-binding and thus inhibits agonist-induced cAMP production. Interacts with OPN3; the interaction results in a decrease in MC1R-mediated cAMP signaling and ultimately a decrease in melanin production in melanocytes.

The protein localises to the cell membrane. Functionally, receptor for MSH (alpha, beta and gamma) and ACTH. The activity of this receptor is mediated by G proteins which activate adenylate cyclase. Mediates melanogenesis, the production of eumelanin (black/brown) and phaeomelanin (red/yellow), via regulation of cAMP signaling in melanocytes. This chain is Melanocyte-stimulating hormone receptor (MC1R), found in Colobus guereza (Mantled guereza).